We begin with the raw amino-acid sequence, 753 residues long: 5-methyltetrahydropteroyltriglutamate--homocysteine methyltransferase (753 aa).

5-methyltetrahydropteroyltri-L-glutamate contacts are provided by residues Arg-17–Lys-20 and Lys-117. L-homocysteine-binding positions include Ile-431–Ser-433 and Glu-484. L-methionine contacts are provided by residues Ile-431–Ser-433 and Glu-484. Residues Arg-515–Cys-516 and Trp-561 each bind 5-methyltetrahydropteroyltri-L-glutamate. Residue Asp-599 coordinates L-homocysteine. Position 599 (Asp-599) interacts with L-methionine. A 5-methyltetrahydropteroyltri-L-glutamate-binding site is contributed by Glu-605. Residues His-641, Cys-643, and Glu-665 each contribute to the Zn(2+) site. Residue His-694 is the Proton donor of the active site. Cys-726 is a binding site for Zn(2+).

The protein belongs to the vitamin-B12 independent methionine synthase family. Zn(2+) serves as cofactor.

The catalysed reaction is 5-methyltetrahydropteroyltri-L-glutamate + L-homocysteine = tetrahydropteroyltri-L-glutamate + L-methionine. The protein operates within amino-acid biosynthesis; L-methionine biosynthesis via de novo pathway; L-methionine from L-homocysteine (MetE route): step 1/1. Functionally, catalyzes the transfer of a methyl group from 5-methyltetrahydrofolate to homocysteine resulting in methionine formation. In Escherichia coli O7:K1 (strain IAI39 / ExPEC), this protein is 5-methyltetrahydropteroyltriglutamate--homocysteine methyltransferase.